Here is a 130-residue protein sequence, read N- to C-terminus: Flagellar assembly factor FliW (130 aa).

This sequence belongs to the FliW family. Interacts with translational regulator CsrA and flagellin(s).

Its subcellular location is the cytoplasm. Acts as an anti-CsrA protein, binds CsrA and prevents it from repressing translation of its target genes, one of which is flagellin. Binds to flagellin and participates in the assembly of the flagellum. This Borrelia duttonii (strain Ly) protein is Flagellar assembly factor FliW.